The sequence spans 196 residues: MSARAPKELRLALPPCLLNRTFASHNASGGSNAGIRSSGAGGGTCITQVGQQLFQSFSSTLVLIVLVTLIFCLIVLSLSTFHIHKRRMKKRKMQRAQEEYERDHCSGSHGGGGLPRAGVQAPTHGKETRLERQPRDSAFCTPSNATSSSSSSPGLLCQGPCAPPPPPPVPSPHGAHAASSCLDTPGEGLLQTVVLS.

Residues 1-23 form the signal peptide; sequence MSARAPKELRLALPPCLLNRTFA. Asn-19 and Asn-26 each carry an N-linked (GlcNAc...) asparagine glycan. Topologically, residues 24-60 are extracellular; that stretch reads SHNASGGSNAGIRSSGAGGGTCITQVGQQLFQSFSST. Residues 61–81 traverse the membrane as a helical segment; that stretch reads LVLIVLVTLIFCLIVLSLSTF. The Cytoplasmic segment spans residues 82–196; it reads HIHKRRMKKR…EGLLQTVVLS (115 aa). The disordered stretch occupies residues 93–184; the sequence is MQRAQEEYER…AHAASSCLDT (92 aa). Basic and acidic residues-rich tracts occupy residues 95 to 106 and 124 to 135; these read RAQEEYERDHCS and HGKETRLERQPR. Residues 161 to 171 are compositionally biased toward pro residues; the sequence is CAPPPPPPVPS. Low complexity predominate over residues 172–181; it reads PHGAHAASSC.

The protein localises to the membrane. This is an uncharacterized protein from Rattus norvegicus (Rat).